The primary structure comprises 234 residues: MTRDWLRRGLRFLLFAMLGFVGLSVLLVLVFRVVPVFGSMVMLERKVESWVSGEPVSIQQQWRPWNALSDNAKLAVIASEDQRFPMHHGFDFNQMQKALDAWFSGDSLRGASTISQQTAKNLFLWTDRSWVRKGLEAWFTVLIELLWPKERILEVYLNIVEWDRGVFGLEAAAQHYFGVSADRLSAAQASRLAAILPNPREWSASRPSSYIVKRSQWIQRQMRQLGGSAYLERL.

Residues 11-31 (RFLLFAMLGFVGLSVLLVLVF) traverse the membrane as a helical segment.

It belongs to the glycosyltransferase 51 family.

Its subcellular location is the cell inner membrane. The enzyme catalyses [GlcNAc-(1-&gt;4)-Mur2Ac(oyl-L-Ala-gamma-D-Glu-L-Lys-D-Ala-D-Ala)](n)-di-trans,octa-cis-undecaprenyl diphosphate + beta-D-GlcNAc-(1-&gt;4)-Mur2Ac(oyl-L-Ala-gamma-D-Glu-L-Lys-D-Ala-D-Ala)-di-trans,octa-cis-undecaprenyl diphosphate = [GlcNAc-(1-&gt;4)-Mur2Ac(oyl-L-Ala-gamma-D-Glu-L-Lys-D-Ala-D-Ala)](n+1)-di-trans,octa-cis-undecaprenyl diphosphate + di-trans,octa-cis-undecaprenyl diphosphate + H(+). Its pathway is cell wall biogenesis; peptidoglycan biosynthesis. Peptidoglycan polymerase that catalyzes glycan chain elongation from lipid-linked precursors. The polypeptide is Biosynthetic peptidoglycan transglycosylase (Chromohalobacter salexigens (strain ATCC BAA-138 / DSM 3043 / CIP 106854 / NCIMB 13768 / 1H11)).